We begin with the raw amino-acid sequence, 373 residues long: Alanine dehydrogenase (373 aa).

Substrate contacts are provided by Arg-15 and Lys-75. His-96 functions as the Proton donor/acceptor in the catalytic mechanism. NAD(+) contacts are provided by residues Ser-134, 178-179 (IV), Asp-198, Ser-220, 239-240 (VL), 267-270 (VAID), Arg-280, and 299-302 (VANI). The active-site Proton donor/acceptor is the Asp-270.

It belongs to the AlaDH/PNT family. In terms of assembly, homohexamer. Trimer of dimer.

Its subcellular location is the cytoplasm. The catalysed reaction is L-alanine + NAD(+) + H2O = pyruvate + NH4(+) + NADH + H(+). The protein operates within amino-acid degradation; L-alanine degradation via dehydrogenase pathway; NH(3) and pyruvate from L-alanine: step 1/1. Its function is as follows. Catalyzes the reversible reductive amination of pyruvate to L-alanine. This enzyme is a key factor in the assimilation of L-alanine as an energy source through the tricarboxylic acid cycle. The protein is Alanine dehydrogenase of Methanococcus maripaludis (strain DSM 14266 / JCM 13030 / NBRC 101832 / S2 / LL).